The chain runs to 56 residues: MARAPQPRRGPAAPGNALRALLRCNLPPGAQRVVVSAVLALLVLINVVLIFLLAFR.

Residues valine 33 to leucine 53 traverse the membrane as a helical segment.

It localises to the membrane. This is Small integral membrane protein 39 from Homo sapiens (Human).